The primary structure comprises 98 residues: Aspartyl/glutamyl-tRNA(Asn/Gln) amidotransferase subunit C (98 aa).

The protein belongs to the GatC family. As to quaternary structure, heterotrimer of A, B and C subunits.

It carries out the reaction L-glutamyl-tRNA(Gln) + L-glutamine + ATP + H2O = L-glutaminyl-tRNA(Gln) + L-glutamate + ADP + phosphate + H(+). It catalyses the reaction L-aspartyl-tRNA(Asn) + L-glutamine + ATP + H2O = L-asparaginyl-tRNA(Asn) + L-glutamate + ADP + phosphate + 2 H(+). Functionally, allows the formation of correctly charged Asn-tRNA(Asn) or Gln-tRNA(Gln) through the transamidation of misacylated Asp-tRNA(Asn) or Glu-tRNA(Gln) in organisms which lack either or both of asparaginyl-tRNA or glutaminyl-tRNA synthetases. The reaction takes place in the presence of glutamine and ATP through an activated phospho-Asp-tRNA(Asn) or phospho-Glu-tRNA(Gln). In Roseiflexus castenholzii (strain DSM 13941 / HLO8), this protein is Aspartyl/glutamyl-tRNA(Asn/Gln) amidotransferase subunit C.